The primary structure comprises 312 residues: Olfactory receptor 1D5 (312 aa).

The Extracellular segment spans residues 1–25 (MDGDNQSENSQFLLLGISESPEQQR). Residue Asn-5 is glycosylated (N-linked (GlcNAc...) asparagine). The helical transmembrane segment at 26-49 (ILFWMFLSMYLVTVLGNVLIILAI) threads the bilayer. At 50-57 (SSDSHLHT) the chain is on the cytoplasmic side. A helical membrane pass occupies residues 58 to 79 (PMYFFLANLSFTDLFFVTNTIP). At 80–100 (KMLVNFQSQNKAISYAGCLTQ) the chain is on the extracellular side. Cys-97 and Cys-189 are oxidised to a cystine. A helical transmembrane segment spans residues 101-120 (LYFLVSLVTLDNLILAVMAY). At 121–140 (DRYVATCCPLHYVTAMSPGL) the chain is on the cytoplasmic side. The chain crosses the membrane as a helical span at residues 141–158 (CVLLLSLCWGLSVLYGLL). The Extracellular portion of the chain corresponds to 159-196 (LTFLLTRVTFCGPREIHYLFCDMYILLWLACSNTHIIH). The helical transmembrane segment at 197–220 (TALIATGCFIFLTPLGFMTTSYVR) threads the bilayer. Over 221–237 (IVRTILQMPSASKKYKT) the chain is Cytoplasmic. A helical membrane pass occupies residues 238-260 (FSTCASHLGVVSLFYGTLAMVYL). Over 261–271 (QPLHTYSMKDS) the chain is Extracellular. The helical transmembrane segment at 272 to 291 (VATVMYAVLTPMMNPFIYRL) threads the bilayer. Topologically, residues 292-312 (RNKDMHGAPGRVLWRPFQRPK) are cytoplasmic.

It belongs to the G-protein coupled receptor 1 family.

The protein resides in the cell membrane. Its function is as follows. Odorant receptor. The polypeptide is Olfactory receptor 1D5 (OR1D5) (Homo sapiens (Human)).